We begin with the raw amino-acid sequence, 225 residues long: Phosphoribosylformylglycinamidine synthase subunit PurQ (225 aa).

The 220-residue stretch at 6-225 folds into the Glutamine amidotransferase type-1 domain; it reads FGVVVFPGSN…WQSILRSFAA (220 aa). The active-site Nucleophile is the C89. Catalysis depends on residues H198 and E200.

Part of the FGAM synthase complex composed of 1 PurL, 1 PurQ and 2 PurS subunits.

Its subcellular location is the cytoplasm. The catalysed reaction is N(2)-formyl-N(1)-(5-phospho-beta-D-ribosyl)glycinamide + L-glutamine + ATP + H2O = 2-formamido-N(1)-(5-O-phospho-beta-D-ribosyl)acetamidine + L-glutamate + ADP + phosphate + H(+). It catalyses the reaction L-glutamine + H2O = L-glutamate + NH4(+). Its pathway is purine metabolism; IMP biosynthesis via de novo pathway; 5-amino-1-(5-phospho-D-ribosyl)imidazole from N(2)-formyl-N(1)-(5-phospho-D-ribosyl)glycinamide: step 1/2. Its function is as follows. Part of the phosphoribosylformylglycinamidine synthase complex involved in the purines biosynthetic pathway. Catalyzes the ATP-dependent conversion of formylglycinamide ribonucleotide (FGAR) and glutamine to yield formylglycinamidine ribonucleotide (FGAM) and glutamate. The FGAM synthase complex is composed of three subunits. PurQ produces an ammonia molecule by converting glutamine to glutamate. PurL transfers the ammonia molecule to FGAR to form FGAM in an ATP-dependent manner. PurS interacts with PurQ and PurL and is thought to assist in the transfer of the ammonia molecule from PurQ to PurL. The sequence is that of Phosphoribosylformylglycinamidine synthase subunit PurQ from Synechococcus sp. (strain JA-2-3B'a(2-13)) (Cyanobacteria bacterium Yellowstone B-Prime).